The chain runs to 323 residues: Aquaporin-4 (323 aa).

Over 1 to 36 the chain is Cytoplasmic; it reads MSDGAAARRWGKCGHSCSRESIMVAFKGVWTQAFWK. S-palmitoyl cysteine attachment occurs at residues Cys-13 and Cys-17. A helical membrane pass occupies residues 37–57; the sequence is AVSAEFLATLIFVLLGVGSTI. Residues 58-69 lie on the Extracellular side of the membrane; that stretch reads NWGGSENPLPVD. Residues 70–89 form a helical membrane-spanning segment; that stretch reads MVLISLCFGLSIATMVQCFG. Over 90-93 the chain is Cytoplasmic; it reads HISG. An intramembrane region (discontinuously helical) is located at residues 94–101; that stretch reads GHINPAVT. Positions 97–99 match the NPA 1 motif; it reads NPA. Topologically, residues 102 to 115 are cytoplasmic; the sequence is VAMVCTRKISIAKS. Ser-111 bears the Phosphoserine; by PKG mark. The chain crosses the membrane as a helical span at residues 116–136; it reads VFYIIAQCLGAIIGAGILYLV. Residues 137–155 are Extracellular-facing; sequence TPPSVVGGLGVTTVHGNLT. A glycan (N-linked (GlcNAc...) asparagine) is linked at Asn-153. A helical membrane pass occupies residues 156-176; sequence AGHGLLVELIITFQLVFTIFA. At 177–184 the chain is on the cytoplasmic side; it reads SCDSKRTD. Ser-180 is modified (phosphoserine; by PKC). The helical transmembrane segment at 185–205 threads the bilayer; the sequence is VTGSIALAIGFSVAIGHLFAI. Asn-206 is a glycosylation site (N-linked (GlcNAc...) asparagine). Over 206–208 the chain is Extracellular; sequence NYT. The discontinuously helical intramembrane region spans 209 to 222; sequence GASMNPARSFGPAV. The NPA 2 signature appears at 213 to 215; it reads NPA. Residues 223–231 are Extracellular-facing; that stretch reads IMGNWANHW. The chain crosses the membrane as a helical span at residues 232–252; it reads IYWVGPIMGAVLAGALYEYVF. Over 253 to 323 the chain is Cytoplasmic; sequence CPDVELKRRL…DSSGEVLSSV (71 aa). A phosphoserine mark is found at Ser-276 and Ser-285. Phosphothreonine is present on Thr-289. Ser-321 is modified (phosphoserine).

This sequence belongs to the MIP/aquaporin (TC 1.A.8) family. In terms of assembly, homotetramer. The tetramers can form oligomeric arrays in membranes. The size of the oligomers differs between tissues and is smaller in skeletal muscle than in brain. Interaction between AQP4 oligomeric arrays in close-by cells can contribute to cell-cell adhesion. Part of a complex containing MLC1, TRPV4, HEPACAM and ATP1B1. In terms of processing, phosphorylation by PKC at Ser-180 reduces conductance by 50%. Phosphorylation by PKG at Ser-111 in response to glutamate increases conductance by 40%; this increase is not due to increased presence at the cell membrane. Isoform 2: Palmitoylated on its N-terminal region. Isoform 1: Not palmitoylated. In terms of tissue distribution, detected in brain cortex, especially around cortical blood vessels, and subjacent to pia, with lower levels in parenchymal membranes. Detected in ependymal and astroglial cells in brain. Detected in supporting Hensen's cells, inner sulcus cells and Claudius cells in the inner ear. Detected in skeletal muscle. Detected in gastric parietal cells. Detected in principal cells in collecting ducts in kidney medulla (at protein level). Detected in brain, heart and skeletal muscle.

The protein localises to the cell membrane. Its subcellular location is the basolateral cell membrane. The protein resides in the endosome membrane. It localises to the sarcolemma. It is found in the cell projection. The enzyme catalyses H2O(in) = H2O(out). In terms of biological role, forms a water-specific channel. Plays an important role in brain water homeostasis and in glymphatic solute transport. Required for a normal rate of water exchange across the blood brain interface. Required for normal levels of cerebrospinal fluid influx into the brain cortex and parenchyma along paravascular spaces that surround penetrating arteries, and for normal drainage of interstitial fluid along paravenous drainage pathways. Thereby, it is required for normal clearance of solutes from the brain interstitial fluid, including soluble beta-amyloid peptides derived from APP. Plays a redundant role in urinary water homeostasis and urinary concentrating ability. The polypeptide is Aquaporin-4 (Aqp4) (Mus musculus (Mouse)).